The sequence spans 102 residues: Large ribosomal subunit protein bL21 (102 aa).

It belongs to the bacterial ribosomal protein bL21 family. In terms of assembly, part of the 50S ribosomal subunit. Contacts protein L20.

In terms of biological role, this protein binds to 23S rRNA in the presence of protein L20. This is Large ribosomal subunit protein bL21 from Shouchella clausii (strain KSM-K16) (Alkalihalobacillus clausii).